The sequence spans 603 residues: UvrABC system protein C (603 aa).

The GIY-YIG domain maps to 15–92 (DQPGCYLMKD…IKKHDPRFNI (78 aa)). Residues 197-232 (KTVKNDLMKKMQEAAENMEFEKAGEFRDQINAIETT) form the UVR domain.

Belongs to the UvrC family. In terms of assembly, interacts with UvrB in an incision complex.

The protein resides in the cytoplasm. The UvrABC repair system catalyzes the recognition and processing of DNA lesions. UvrC both incises the 5' and 3' sides of the lesion. The N-terminal half is responsible for the 3' incision and the C-terminal half is responsible for the 5' incision. This Listeria monocytogenes serovar 1/2a (strain ATCC BAA-679 / EGD-e) protein is UvrABC system protein C.